The sequence spans 786 residues: Endonuclease MutS2 (786 aa).

An ATP-binding site is contributed by 332–339 (GPNTGGKT). The Smr domain maps to 711–786 (VDLRGMDSIE…GTGVTIVELK (76 aa)).

It belongs to the DNA mismatch repair MutS family. MutS2 subfamily. Homodimer. Binds to stalled ribosomes, contacting rRNA.

Endonuclease that is involved in the suppression of homologous recombination and thus may have a key role in the control of bacterial genetic diversity. Functionally, acts as a ribosome collision sensor, splitting the ribosome into its 2 subunits. Detects stalled/collided 70S ribosomes which it binds and splits by an ATP-hydrolysis driven conformational change. Acts upstream of the ribosome quality control system (RQC), a ribosome-associated complex that mediates the extraction of incompletely synthesized nascent chains from stalled ribosomes and their subsequent degradation. Probably generates substrates for RQC. In Clostridium kluyveri (strain NBRC 12016), this protein is Endonuclease MutS2.